The sequence spans 186 residues: Early nodulin-like protein 13 (186 aa).

The first 23 residues, 1–23 (MAQRTLVATFFLIFFLLTNLVCS), serve as a signal peptide directing secretion. Residues 24 to 128 (KEIIVGGKTS…GEKLHIVVMS (105 aa)) enclose the Phytocyanin domain. The cysteines at positions 82 and 116 are disulfide-linked. N-linked (GlcNAc...) asparagine glycans are attached at residues N83 and N90. A165 carries the GPI-anchor amidated alanine lipid modification. Residues 166–186 (SSLTRQVGVLGFVGLLAIVLL) constitute a propeptide, removed in mature form.

This sequence belongs to the early nodulin-like (ENODL) family. Mostly expressed in seedlings, siliques and flowers, and, to a lower extent, in roots, stems and seeds, but barely in leaves.

The protein localises to the cell membrane. May act as a carbohydrate transporter. Required, together with ENODL11, ENODL12, ENODL13, ENODL14 and ENODL15, for male-female communication and pollen tube reception and burst at the synergid cell surface of the female gametophyte. The sequence is that of Early nodulin-like protein 13 from Arabidopsis thaliana (Mouse-ear cress).